A 578-amino-acid chain; its full sequence is Transmembrane protein 121B (578 aa).

Disordered stretches follow at residues 1 to 84 (MRPA…ESLS) and 106 to 129 (AGPAPVAFSSSAATSSSTSTPTSS). Low complexity-rich tracts occupy residues 8–17 (PRSVSSASGS) and 44–53 (GDSSTSTSTS). The span at 54-67 (RGGGGGRRGGGGGS) shows a compositional bias: gly residues. A Phosphoserine modification is found at Ser-167. Residues 529–557 (RARGGYGAPPSAPPPPPPPPQGGSQLGHC) are disordered. The span at 538–549 (PSAPPPPPPPPQ) shows a compositional bias: pro residues. Ser-552 carries the post-translational modification Phosphoserine.

It belongs to the TMEM121 family. Widely expressed, especially in adult heart, brain, prostate, testes, peripherical blood leukocytes and fetal brain.

The polypeptide is Transmembrane protein 121B (Homo sapiens (Human)).